The chain runs to 225 residues: Transmembrane protein 225 (225 aa).

Over 1 to 8 (MVHVSNRS) the chain is Cytoplasmic. The chain crosses the membrane as a helical span at residues 9–29 (IQGMNILFSSWAVVLMVMGIT). Residues 30–72 (LDKWVELISEDERAKMNHSPWMMCCPALWPEDDLKVVRIMMTS) are Extracellular-facing. Residues 73–93 (SLGLSFLLNLILGMKFTYLIP) form a helical membrane-spanning segment. At 94–99 (QNKYIQ) the chain is on the cytoplasmic side. Residues 100–120 (LFTTILSFFSGISLLWALILY) traverse the membrane as a helical segment. Topologically, residues 121-136 (HNKLKQGQSMHFSSYR) are extracellular. The helical transmembrane segment at 137–157 (ITWIMYTAYLNVFFLSVCGVL) threads the bilayer. At 158–225 (SLLECKLSTS…VQTRHVTWAL (68 aa)) the chain is on the cytoplasmic side. The RVxF motif lies at 219 to 223 (RHVTW).

Interacts (via RVxF motif) with PPP1CC.

The protein resides in the cytoplasmic vesicle. The protein localises to the secretory vesicle. Its subcellular location is the acrosome membrane. In terms of biological role, probably inhibits protein phosphatase 1 (PP1) in sperm via binding to catalytic subunit PPP1CC. This chain is Transmembrane protein 225 (TMEM225), found in Homo sapiens (Human).